Reading from the N-terminus, the 255-residue chain is Imidazole glycerol phosphate synthase subunit HisF (255 aa).

Active-site residues include Asp-11 and Asp-130.

Belongs to the HisA/HisF family. Heterodimer of HisH and HisF.

The protein resides in the cytoplasm. The catalysed reaction is 5-[(5-phospho-1-deoxy-D-ribulos-1-ylimino)methylamino]-1-(5-phospho-beta-D-ribosyl)imidazole-4-carboxamide + L-glutamine = D-erythro-1-(imidazol-4-yl)glycerol 3-phosphate + 5-amino-1-(5-phospho-beta-D-ribosyl)imidazole-4-carboxamide + L-glutamate + H(+). Its pathway is amino-acid biosynthesis; L-histidine biosynthesis; L-histidine from 5-phospho-alpha-D-ribose 1-diphosphate: step 5/9. In terms of biological role, IGPS catalyzes the conversion of PRFAR and glutamine to IGP, AICAR and glutamate. The HisF subunit catalyzes the cyclization activity that produces IGP and AICAR from PRFAR using the ammonia provided by the HisH subunit. This chain is Imidazole glycerol phosphate synthase subunit HisF, found in Campylobacter lari (strain RM2100 / D67 / ATCC BAA-1060).